A 182-amino-acid chain; its full sequence is Trypsin inhibitor 2 (182 aa).

Q1 bears the Pyrrolidone carboxylic acid mark. 2 disulfide bridges follow: C40-C84 and C136-C147.

The protein belongs to the protease inhibitor I3 (leguminous Kunitz-type inhibitor) family.

This chain is Trypsin inhibitor 2, found in Psophocarpus tetragonolobus (Winged bean).